The primary structure comprises 599 residues: Ecdysone oxidase (599 aa).

FAD is bound by residues 137 to 140 and 537 to 538; these read NDMV and WH. Histidine 538 acts as the Proton acceptor in catalysis.

Belongs to the GMC oxidoreductase family. FAD serves as cofactor.

The catalysed reaction is ecdysone + O2 = 3-dehydroecdysone + H2O2. Its function is as follows. Involved in the inactivation of ecdysteroid molting hormones by converting ecdysteroids into 3-dehydroecdysteroids. In Spodoptera littoralis (Egyptian cotton leafworm), this protein is Ecdysone oxidase.